Reading from the N-terminus, the 158-residue chain is NAD(P)H-quinone oxidoreductase subunit J, chloroplastic (158 aa).

This sequence belongs to the complex I 30 kDa subunit family. As to quaternary structure, NDH is composed of at least 16 different subunits, 5 of which are encoded in the nucleus.

It localises to the plastid. The protein resides in the chloroplast thylakoid membrane. It carries out the reaction a plastoquinone + NADH + (n+1) H(+)(in) = a plastoquinol + NAD(+) + n H(+)(out). The enzyme catalyses a plastoquinone + NADPH + (n+1) H(+)(in) = a plastoquinol + NADP(+) + n H(+)(out). NDH shuttles electrons from NAD(P)H:plastoquinone, via FMN and iron-sulfur (Fe-S) centers, to quinones in the photosynthetic chain and possibly in a chloroplast respiratory chain. The immediate electron acceptor for the enzyme in this species is believed to be plastoquinone. Couples the redox reaction to proton translocation, and thus conserves the redox energy in a proton gradient. The sequence is that of NAD(P)H-quinone oxidoreductase subunit J, chloroplastic from Vitis vinifera (Grape).